A 911-amino-acid chain; its full sequence is Probable dipeptidyl-aminopeptidase B (911 aa).

The tract at residues 1–39 is disordered; that stretch reads MPRPRAAKEEETELLAQHQESPRPSSDGSEASASSISTT. The Cytoplasmic portion of the chain corresponds to 1–97; that stretch reads MPRPRAAKEE…TPVDKKARRT (97 aa). The span at 25–39 shows a compositional bias: low complexity; sequence SSDGSEASASSISTT. A helical; Signal-anchor for type II membrane protein transmembrane segment spans residues 98-118; that stretch reads LWIVGTICAVGWALALVSFLM. The Vacuolar segment spans residues 119-911; it reads NGNYKHSSTR…AQADARSLGR (793 aa). 2 N-linked (GlcNAc...) asparagine glycosylation sites follow: asparagine 268 and asparagine 564. Serine 755 serves as the catalytic Charge relay system. The N-linked (GlcNAc...) asparagine glycan is linked to asparagine 809. Catalysis depends on charge relay system residues aspartate 832 and histidine 865.

It belongs to the peptidase S9B family.

The protein resides in the vacuole membrane. The enzyme catalyses Release of an N-terminal dipeptide, Xaa-Yaa-|-Zaa-, from a polypeptide, preferentially when Yaa is Pro, provided Zaa is neither Pro nor hydroxyproline.. In terms of biological role, type IV dipeptidyl-peptidase which removes N-terminal dipeptides sequentially from polypeptides having unsubstituted N-termini provided that the penultimate residue is proline. This Phaeosphaeria nodorum (strain SN15 / ATCC MYA-4574 / FGSC 10173) (Glume blotch fungus) protein is Probable dipeptidyl-aminopeptidase B (DAPB).